The sequence spans 299 residues: ATP phosphoribosyltransferase (299 aa).

The protein belongs to the ATP phosphoribosyltransferase family. Long subfamily. As to quaternary structure, equilibrium between an active dimeric form, an inactive hexameric form and higher aggregates. Interconversion between the various forms is largely reversible and is influenced by the natural substrates and inhibitors of the enzyme. The cofactor is Mg(2+).

It is found in the cytoplasm. The enzyme catalyses 1-(5-phospho-beta-D-ribosyl)-ATP + diphosphate = 5-phospho-alpha-D-ribose 1-diphosphate + ATP. The protein operates within amino-acid biosynthesis; L-histidine biosynthesis; L-histidine from 5-phospho-alpha-D-ribose 1-diphosphate: step 1/9. With respect to regulation, feedback inhibited by histidine. In terms of biological role, catalyzes the condensation of ATP and 5-phosphoribose 1-diphosphate to form N'-(5'-phosphoribosyl)-ATP (PR-ATP). Has a crucial role in the pathway because the rate of histidine biosynthesis seems to be controlled primarily by regulation of HisG enzymatic activity. The chain is ATP phosphoribosyltransferase from Salmonella enteritidis PT4 (strain P125109).